The primary structure comprises 317 residues: Homoserine O-succinyltransferase (317 aa).

Cys-142 (acyl-thioester intermediate) is an active-site residue. Positions 163 and 192 each coordinate substrate. His-235 functions as the Proton acceptor in the catalytic mechanism. Glu-237 is a catalytic residue. A substrate-binding site is contributed by Arg-249.

The protein belongs to the MetA family.

It localises to the cytoplasm. The enzyme catalyses L-homoserine + succinyl-CoA = O-succinyl-L-homoserine + CoA. Its pathway is amino-acid biosynthesis; L-methionine biosynthesis via de novo pathway; O-succinyl-L-homoserine from L-homoserine: step 1/1. Its function is as follows. Transfers a succinyl group from succinyl-CoA to L-homoserine, forming succinyl-L-homoserine. This is Homoserine O-succinyltransferase from Aeromonas hydrophila subsp. hydrophila (strain ATCC 7966 / DSM 30187 / BCRC 13018 / CCUG 14551 / JCM 1027 / KCTC 2358 / NCIMB 9240 / NCTC 8049).